Here is a 186-residue protein sequence, read N- to C-terminus: Elongation factor P (186 aa).

Belongs to the elongation factor P family.

It localises to the cytoplasm. The protein operates within protein biosynthesis; polypeptide chain elongation. Functionally, involved in peptide bond synthesis. Stimulates efficient translation and peptide-bond synthesis on native or reconstituted 70S ribosomes in vitro. Probably functions indirectly by altering the affinity of the ribosome for aminoacyl-tRNA, thus increasing their reactivity as acceptors for peptidyl transferase. The protein is Elongation factor P of Clostridium acetobutylicum (strain ATCC 824 / DSM 792 / JCM 1419 / IAM 19013 / LMG 5710 / NBRC 13948 / NRRL B-527 / VKM B-1787 / 2291 / W).